Reading from the N-terminus, the 460-residue chain is MKSEVLSVKEKIGYGMGDAASHIIFDNVMLYMMFFYTDIFGIPAGFVGTMFLVARALDAISDPCMGLLADRTRSRWGKFRPWVLFGALPFGIVCVLAYSTPDLSMNGKMIYAAITYTLLTLLYTVVNIPYCALGGVITNDPTQRISLQSWRFVLATAGGMLSTVLMMPLVNLIGGDNKPLGFQGGIAVLSVVAFMMLAFCFFTTKERVEAPPTTTSMREDLRDIWQNDQWRIVGLLTIFNILAVCVRGGAMMYYVTWILGTPEVFVAFLTTYCVGNLIGSALAKPLTDWKCKVTIFWWTNALLAVISLAMFFVPMQASITMFVFIFVIGVLHQLVTPIQWVMMSDTVDYGEWCNGKRLTGISFAGTLFVLKLGLAFGGALIGWMLAYGGYDAAEKAQNSATISIIIALFTIVPAICYLLSAIIAKRYYSLTTHNLKTVMEQLAQGKRRCQQQFTSQEVQN.

The Periplasmic portion of the chain corresponds to 1–11; the sequence is MKSEVLSVKEK. 2 helical membrane-spanning segments follow: residues 12-32 and 33-53; these read IGYG…MLYM and MFFY…MFLV. Residues 54–80 lie on the Periplasmic side of the membrane; it reads ARALDAISDPCMGLLADRTRSRWGKFR. Residues 81-101 form a helical membrane-spanning segment; it reads PWVLFGALPFGIVCVLAYSTP. Residues 102 to 116 are Cytoplasmic-facing; it reads DLSMNGKMIYAAITY. The helical transmembrane segment at 117 to 137 threads the bilayer; sequence TLLTLLYTVVNIPYCALGGVI. Residues 138-152 are Periplasmic-facing; sequence TNDPTQRISLQSWRF. A helical transmembrane segment spans residues 153–173; it reads VLATAGGMLSTVLMMPLVNLI. At 174-181 the chain is on the cytoplasmic side; it reads GGDNKPLG. A helical membrane pass occupies residues 182 to 202; the sequence is FQGGIAVLSVVAFMMLAFCFF. The Periplasmic portion of the chain corresponds to 203–248; the sequence is TTKERVEAPPTTTSMREDLRDIWQNDQWRIVGLLTIFNILAVCVRG. The helical transmembrane segment at 249 to 269 threads the bilayer; it reads GAMMYYVTWILGTPEVFVAFL. Residues 270-288 lie on the Cytoplasmic side of the membrane; that stretch reads TTYCVGNLIGSALAKPLTD. Residues 289–309 form a helical membrane-spanning segment; sequence WKCKVTIFWWTNALLAVISLA. A topological domain (periplasmic) is located at residue methionine 310. Residues 311 to 331 traverse the membrane as a helical segment; sequence FFVPMQASITMFVFIFVIGVL. At 332 to 366 the chain is on the cytoplasmic side; that stretch reads HQLVTPIQWVMMSDTVDYGEWCNGKRLTGISFAGT. Residues 367-387 traverse the membrane as a helical segment; sequence LFVLKLGLAFGGALIGWMLAY. The Periplasmic segment spans residues 388–403; sequence GGYDAAEKAQNSATIS. The chain crosses the membrane as a helical span at residues 404–424; it reads IIIALFTIVPAICYLLSAIIA. Residues 425 to 460 lie on the Cytoplasmic side of the membrane; sequence KRYYSLTTHNLKTVMEQLAQGKRRCQQQFTSQEVQN.

The protein belongs to the sodium:galactoside symporter (TC 2.A.2) family.

Its subcellular location is the cell inner membrane. This is Inner membrane symporter YicJ (yicJ) from Escherichia coli (strain K12).